The sequence spans 148 residues: Transcriptional regulator MraZ (148 aa).

SpoVT-AbrB domains follow at residues 5 to 51 and 80 to 123; these read STQL…PQPV and ACDV…DMAK.

It belongs to the MraZ family. As to quaternary structure, forms oligomers.

It localises to the cytoplasm. The protein localises to the nucleoid. This is Transcriptional regulator MraZ from Nitrosomonas eutropha (strain DSM 101675 / C91 / Nm57).